Reading from the N-terminus, the 1057-residue chain is MVRKKVDTRIRTLIENGVATNHRSFFVIVGDNGKDQVPNLHYILSKSIVKARPSVLWCYKEDLGFSKHKKKKMKLKEKSKSSGIDSVNQEDPFDVFISTTNIRYSYYSESHKILGNTFGMLVLQDFEAITPNLLARTIETVEGGGLIVLLLKTMDSLKQLYTMTMDVHTRFRSENSKGEVVCRFNERFLLSLGKSEQCLVMDDELNILPISSQSRSIEAKQQILETPEQVELREFKQQVKDTDIAGALIENTKTMDQATALLTFIDSISEKTLRSTVTLTAGRGRGKSAALGLAISAAVAFGYSNIFVSSPTPENLNTLFQFVFKGFDSMEYVEHVDYELVKSTNPEFHDAIIRVNIFRSHRQTIQYIQPQDYQKLGQAELVVIDEAAAIPLPLVKNLLGPYLVFMSSTINGYEGTGRSLSLKLIKQLREQSTVVSNSSNKALNSITGRMLREIELNEPIRYSARDPIERWLNELLCLDSTIAKSSPTGCPHPSACQLYYVNRDTLFSYHKASEAFLQKMVGLFVSSHYKNSPNDLLLMSDAPDHHLFVLLGPIDENNTTGLPEILCAVQVSLEGEIAKESILNSIKRGYQASGDLIPWTLTQQYQDEDFPRLSGVRIVRIATHPDYQKMGYGSKALELLTQYYQGEITNLDEVNQEEEEEDEEKVDQNKGSSKISTVKKDNASLLTEVIRPKSNIPPLLFKLSERKPEKLHYMGVSYGLTQQLYQFWSKSKYLPVYLRLTSNDITGEHTCIMLRELNNEQNNTICKDGWLQSFHQDFKKRFINLLGYEFRNFNSSIALNILYEKKVNNTVAVASSTTKNELTQNEMELLFSSYDLKRLESYSNNIVDYHVVIDLLPSLSKLYFTNKLKIEDISLIQSAILLALGLQHKTVDNLIGELNLASNQVLSLFNQTMRKINTELKQKQEKFIQDSMPKLSIVAPRTGQFKSFKGDIKETDMIPLAEDMESELEKGAEEVVNKLKHQLENDSSLSKYLVKGNDEDWSKALKPGSIPNSITIKRKSDENEETDKKENNKKSKTKNNNNNNNNNKKVNNQKSKK.

Residues Gly-284–Leu-293 and Arg-461 each bind ATP. An N-acetyltransferase domain is found at Val-549–Asn-682. Residues Ile-621–Thr-623 and Gln-628–Ser-634 each bind acetyl-CoA. The segment covering Val-654–Lys-665 has biased composition (acidic residues). The interval Val-654–Ile-675 is disordered. An acetyl-CoA-binding site is contributed by Lys-730. The disordered stretch occupies residues Trp-1001–Lys-1057. Positions Arg-1018–Lys-1033 are enriched in basic and acidic residues. The segment covering Lys-1038–Lys-1057 has biased composition (low complexity).

It belongs to the RNA cytidine acetyltransferase family. NAT10 subfamily. Part of the small subunit (SSU) processome, composed of more than 70 proteins and the RNA chaperone small nucleolar RNA (snoRNA) U3.

It is found in the nucleus. It localises to the nucleolus. The catalysed reaction is a cytidine in 18S rRNA + acetyl-CoA + ATP + H2O = an N(4)-acetylcytidine in 18S rRNA + ADP + phosphate + CoA + H(+). The enzyme catalyses a cytidine in tRNA + acetyl-CoA + ATP + H2O = an N(4)-acetylcytidine in tRNA + ADP + phosphate + CoA + H(+). Functionally, RNA cytidine acetyltransferase with specificity toward both 18S rRNA and tRNAs. Catalyzes the formation of N(4)-acetylcytidine (ac4C) in 18S rRNA. Required for early nucleolar cleavages of precursor rRNA at sites A0, A1 and A2 during 18S rRNA synthesis. Catalyzes the formation of ac4C in serine and leucine tRNAs. Requires a tRNA-binding adapter protein for full tRNA acetyltransferase activity but not for 18S rRNA acetylation. Part of the small subunit (SSU) processome, first precursor of the small eukaryotic ribosomal subunit. During the assembly of the SSU processome in the nucleolus, many ribosome biogenesis factors, an RNA chaperone and ribosomal proteins associate with the nascent pre-rRNA and work in concert to generate RNA folding, modifications, rearrangements and cleavage as well as targeted degradation of pre-ribosomal RNA by the RNA exosome. This Dictyostelium discoideum (Social amoeba) protein is RNA cytidine acetyltransferase (nat10).